We begin with the raw amino-acid sequence, 22 residues long: Melittin-related peptide FQ-22-1 (22 aa).

Glutamine 22 carries the glutamine amide modification.

As to expression, expressed by the skin glands.

The protein resides in the secreted. The polypeptide is Melittin-related peptide FQ-22-1 (Rana arvalis (Moor frog)).